A 55-amino-acid chain; its full sequence is Large ribosomal subunit protein bL33 (55 aa).

Belongs to the bacterial ribosomal protein bL33 family.

The chain is Large ribosomal subunit protein bL33 from Methylocella silvestris (strain DSM 15510 / CIP 108128 / LMG 27833 / NCIMB 13906 / BL2).